The primary structure comprises 445 residues: Probable aminotransferase TAT3 (445 aa).

The protein belongs to the class-I pyridoxal-phosphate-dependent aminotransferase family. Pyridoxal 5'-phosphate serves as cofactor. As to expression, expressed in roots, leaves and cauline leaves.

The protein is Probable aminotransferase TAT3 (TAT3) of Arabidopsis thaliana (Mouse-ear cress).